A 616-amino-acid chain; its full sequence is Sodium- and chloride-dependent transporter XTRP3 (616 aa).

Residues 1–11 (MRLAIKRRASR) are compositionally biased toward basic residues. Residues 1–26 (MRLAIKRRASRGQRPGPDEKRARDME) form a disordered region. Topologically, residues 1–37 (MRLAIKRRASRGQRPGPDEKRARDMEKARPQWGNPLQ) are cytoplasmic. Basic and acidic residues predominate over residues 16–26 (GPDEKRARDME). A helical transmembrane segment spans residues 38–58 (FVFACISYAVGLGNVWRFPYL). Residues 59–66 (CQMYGGGS) are Extracellular-facing. Residues 67–87 (FLVPYLIMLIVEGMPLLYLEL) form a helical membrane-spanning segment. The Cytoplasmic segment spans residues 88–103 (AVGQRMRQGSIGAWRT). The chain crosses the membrane as a helical span at residues 104-124 (ISPYLSGVGVASVVVSFFLSM). At 125–189 (YYNVINAWGF…ISPSIQENGG (65 aa)) the chain is on the extracellular side. An N-linked (GlcNAc...) asparagine glycan is attached at Asn-155. Residues 190 to 210 (VQWEPALCLTLAWLMVYLCIL) form a helical membrane-spanning segment. Over 211 to 218 (RGTESTGK) the chain is Cytoplasmic. A helical membrane pass occupies residues 219–239 (VVYFTALMPYCVLIIYLVRGL). The Extracellular portion of the chain corresponds to 240-265 (TLHGATNGLMYMFTPKIEQLANPKAW). The helical transmembrane segment at 266–286 (INAATQIFFSLGLGFGSLIAF) threads the bilayer. Over 287-300 (ASYNEPSNDCQKHA) the chain is Cytoplasmic. Residues 301-321 (VIVSVINSSTSIFASIVTFSI) traverse the membrane as a helical segment. The Extracellular segment spans residues 322 to 413 (YGFKATFNYE…EAIKNMEVSQ (92 aa)). Residue Asn-381 is glycosylated (N-linked (GlcNAc...) asparagine). Residues 414-434 (LWSVLYFFMLLMLGMGSMLGN) form a helical membrane-spanning segment. Topologically, residues 435 to 455 (TAAILTPLTDSKVISSYLPKE) are cytoplasmic. Residues 456–476 (AISGLVCLINCAVGMVFTMEA) traverse the membrane as a helical segment. Topologically, residues 477 to 489 (GNYWFDIFNDYAA) are extracellular. A helical transmembrane segment spans residues 490-510 (TLSLLLIVLVETIAVCYVYGL). At 511 to 533 (RRFESDLRAMTGRPLNWYWKAMW) the chain is on the cytoplasmic side. Residues 534–554 (AFVSPLLIIGLFIFYLSDYIL) traverse the membrane as a helical segment. The Extracellular portion of the chain corresponds to 555-578 (TGTLQYQAWDATQGQLVTKDYPPH). Residues 579-599 (ALAVIGLLVASSTMCIPLVAL) traverse the membrane as a helical segment. The Cytoplasmic segment spans residues 600-616 (GTFIRNRLKRGGSSPVA).

The protein belongs to the sodium:neurotransmitter symporter (SNF) (TC 2.A.22) family. SLC6A20 subfamily. In terms of tissue distribution, highly expressed in epithelial cells of duodenum, jejunum, ileum, stomach, cecum, colon and kidney proximal tubule. Also expressed in the choroid plexus, microglia and meniges of the brain and in the ovary.

The protein localises to the apical cell membrane. The catalysed reaction is L-proline(out) + chloride(out) + 2 Na(+)(out) = L-proline(in) + chloride(in) + 2 Na(+)(in). The enzyme catalyses 4-hydroxy-L-proline(out) + chloride(out) + 2 Na(+)(out) = 4-hydroxy-L-proline(in) + chloride(in) + 2 Na(+)(in). It catalyses the reaction 2-methyl-2-(methylamino)propanoate(out) + chloride(out) + 2 Na(+)(out) = 2-methyl-2-(methylamino)propanoate(in) + chloride(in) + 2 Na(+)(in). It carries out the reaction L-pipecolate(out) + chloride(out) + 2 Na(+)(out) = L-pipecolate(in) + chloride(in) + 2 Na(+)(in). The catalysed reaction is glycine betaine(out) + chloride(out) + 2 Na(+)(out) = glycine betaine(in) + chloride(in) + 2 Na(+)(in). The enzyme catalyses glycine(out) + chloride(out) + 2 Na(+)(out) = glycine(in) + chloride(in) + 2 Na(+)(in). Functionally, mediates the Na(+)- and Cl(-)-dependent uptake of imino acids such as L-proline, N-methyl-L-proline and pipecolate as well as N-methylated amino acids. Also transports glycine, regulates proline and glycine homeostasis in the brain playing a role in the modulation of NMDAR currents. In Rattus norvegicus (Rat), this protein is Sodium- and chloride-dependent transporter XTRP3.